Reading from the N-terminus, the 688-residue chain is MSLLLFLLSFLLDGPQGQMESYFLQVQRIVKAQEGLCIFVPCSFSSPEGKWLNRSPLYGYWFKGIRKPSLSFPVATNNKDKVLEWEARGRFQLLGDISKKNCSLLIKDVQWGDSTNYFFRMERGFERFSFKEEFRLQVEALTQKPDIFIPEVLEPGEPVTVVCLFSWTFNQCPAPSFSWMGDAVSFQESRPHTSNYSVLSFIPGLQHHDTELTCQLDFSRMSTQRTVRLRVAYAPRSLAISIFHDNVSVPDLHENPSHLEVQQGQSLRLLCTADSQPPATLSWVLEDQVLSWSSPVGSRTLALELPWVKAGDSGHYTCQAENRLGSQQHTLDLSVLYPPQDLRVTVSQANRTVLEILRNAISLPVLEGQSLCLVCVTYSNPPANVSWAWVTQTLIPIQSSEPGVLELPLVQREHEGEFTCAAQNPLGAQRISLSLSVHYPPQMSSPSCSWEAKGLHCNCSSRAWPAPSLRWRLGEGLLEGNSSNASFTVTFSSLGPWVNSSLSLLQELGPSLWLSCESWNTHGAQTTSVLLLPDKDSATAFSKGAVLGFGITALLALCLIVVIVKTLQKKGTQEEPSRPKLSRGSTILDYINVVPKTRSLARNWKAEPDAPSRSSPLDTHFPKPKKKQKDPHFTYPGCPDPTSSSQVPVSENNPEELHYAALNFSRLRLQETQDPQDTYSDYTEVRVH.

The N-terminal stretch at 1 to 17 is a signal peptide; sequence MSLLLFLLSFLLDGPQG. Over 18–543 the chain is Extracellular; the sequence is QMESYFLQVQ…DKDSATAFSK (526 aa). Positions 26-138 constitute an Ig-like V-type domain; it reads VQRIVKAQEG…SFKEEFRLQV (113 aa). 3 cysteine pairs are disulfide-bonded: cysteine 37–cysteine 172, cysteine 42–cysteine 102, and cysteine 163–cysteine 214. Arginine 120 is an N-acetylneuraminate binding site. The 84-residue stretch at 145–228 folds into the Ig-like C2-type 1 domain; sequence PDIFIPEVLE…SRMSTQRTVR (84 aa). 2 N-linked (GlcNAc...) asparagine glycosylation sites follow: asparagine 195 and asparagine 246. Ig-like C2-type domains follow at residues 250–334 and 339–436; these read PDLH…LDLS and PQDL…LSLS. 2 cysteine pairs are disulfide-bonded: cysteine 271-cysteine 318 and cysteine 375-cysteine 420. A helical membrane pass occupies residues 544-564; that stretch reads GAVLGFGITALLALCLIVVIV. Topologically, residues 565 to 688 are cytoplasmic; the sequence is KTLQKKGTQE…YSDYTEVRVH (124 aa). The ITIM motif 1 motif lies at 588 to 593; that stretch reads LDYINV. Residues 602-656 are disordered; the sequence is RNWKAEPDAPSRSSPLDTHFPKPKKKQKDPHFTYPGCPDPTSSSQVPVSENNPEE. A compositionally biased stretch (polar residues) spans 641 to 652; the sequence is PTSSSQVPVSEN. The ITIM motif 2 motif lies at 657–662; it reads LHYAAL. A Phosphotyrosine modification is found at tyrosine 659.

Belongs to the immunoglobulin superfamily. SIGLEC (sialic acid binding Ig-like lectin) family. As to quaternary structure, interacts with PTPN6/SHP-1 upon phosphorylation. Interacts with NCF1. Interacts with CD24; the probable CD24:SIGLEC10 complex is proposed to inhibit HGMB1-mediated tissue damage immune response. Interacts with HMGB1; the interaction is dependent on CD24. Associates with membrane IgM on the B cell surface. Interacts with RIGI, CBL and PTPN11. Post-translationally, phosphorylation of Tyr-659 is involved in binding to PTPN6. Expressed in B cells with high levels in pre-B cells and B1a cells of the peritoneal cavity.

The protein resides in the cell membrane. Its function is as follows. Putative adhesion molecule that mediates sialic-acid dependent binding to cells. Preferentially binds to alpha-2,3- or alpha-2,6-linked sialic acid. The sialic acid recognition site may be masked by cis interactions with sialic acids on the same cell surface. In the immune response, seems to act as an inhibitory receptor upon ligand induced tyrosine phosphorylation by recruiting cytoplasmic phosphatase(s) via their SH2 domain(s) that block signal transduction through dephosphorylation of signaling molecules. Involved in negative regulation of B-cell antigen receptor signaling and specifically acts on B1 cells to inhibit Ca(2+) signaling, cellular expansion and antibody secretion. The inhibition of B cell activation is dependent on PTPN6/SHP-1. In association with CD24 may be involved in the selective suppression of the immune response to danger-associated molecular patterns (DAMPs) such as HMGB1, HSP70 and HSP90. In association with CD24 may regulate the immune repsonse of natural killer (NK) cells. Plays a role in the control of autoimmunity. During initiation of adaptive immune responses by CD8-alpha(+) dendritic cells inhibits cross-presentation by impairing the formation of MHC class I-peptide complexes. The function seems to implicate recruitment of PTPN6/SHP-1, which dephosphorylates NCF1 of the NADPH oxidase complex consequently promoting phagosomal acidification. Functionally, (Microbial infection) During infection by RNA viruses inhibits RIG-I signaling in macrophages by promoting its CBL-dependent ubiquitination and degradation via PTPN11/SHP-2. This chain is Sialic acid-binding Ig-like lectin 10 (Siglec10), found in Mus musculus (Mouse).